The sequence spans 545 residues: External NADH-ubiquinone oxidoreductase 2, mitochondrial (545 aa).

A mitochondrion-targeting transit peptide spans 1 to 21 (MLPRLGFARTARSIHRFKMTQ). 99-129 (ELVILGTGWGAISLLKKLDTSLYNVTVVSPR) lines the FAD pocket. 260–296 (LTFVVVGGGPTGVEFAAELQDYINQDLRKWMPDLSKE) contributes to the NAD(+) binding site.

It belongs to the NADH dehydrogenase family.

It is found in the mitochondrion intermembrane space. The enzyme catalyses a quinone + NADH + H(+) = a quinol + NAD(+). The catalysed reaction is a ubiquinone + NADH + H(+) = a ubiquinol + NAD(+). Functionally, external NADH dehydrogenase required for optimum cellular growth with a number of nonfermentable carbon sources, including ethanol. With NDE1, performes the mitochondrial oxidation of cytosolic NADH under these growth conditions. Regulates the mitochondrial glycerol-3-phosphate dehydrogenase, GUT2, also involved in cytosolic NADH oxidation. In Saccharomyces cerevisiae (strain ATCC 204508 / S288c) (Baker's yeast), this protein is External NADH-ubiquinone oxidoreductase 2, mitochondrial (NDE2).